The primary structure comprises 37 residues: Palicourein (37 aa).

The cyclopeptide (Gly-Asn) cross-link spans G1 to N37. 3 cysteine pairs are disulfide-bonded: C6–C24, C10–C26, and C16–C34.

This sequence belongs to the cyclotide family. This is a cyclic peptide.

Functionally, probably participates in a plant defense mechanism. Inhibits the cytopathic effects of the human immunodeficiency virus. This chain is Palicourein, found in Palicourea condensata (Cappel).